A 46-amino-acid chain; its full sequence is Sperm protamine P1 (46 aa).

Belongs to the protamine P1 family. In terms of tissue distribution, testis.

Its subcellular location is the nucleus. It is found in the chromosome. Protamines substitute for histones in the chromatin of sperm during the haploid phase of spermatogenesis. They compact sperm DNA into a highly condensed, stable and inactive complex. This chain is Sperm protamine P1 (PRM1), found in Glauconycteris beatrix (Beatrix's bat).